Here is a 703-residue protein sequence, read N- to C-terminus: Elongation factor G (703 aa).

The tr-type G domain occupies 8 to 290; the sequence is ARYRNIGICA…AVIEYLPAPT (283 aa). Residues 17 to 24, 88 to 92, and 142 to 145 contribute to the GTP site; these read AHVDAGKT, DTPGH, and NKMD.

The protein belongs to the TRAFAC class translation factor GTPase superfamily. Classic translation factor GTPase family. EF-G/EF-2 subfamily.

It is found in the cytoplasm. Functionally, catalyzes the GTP-dependent ribosomal translocation step during translation elongation. During this step, the ribosome changes from the pre-translocational (PRE) to the post-translocational (POST) state as the newly formed A-site-bound peptidyl-tRNA and P-site-bound deacylated tRNA move to the P and E sites, respectively. Catalyzes the coordinated movement of the two tRNA molecules, the mRNA and conformational changes in the ribosome. This Teredinibacter turnerae (strain ATCC 39867 / T7901) protein is Elongation factor G.